The sequence spans 278 residues: Undecaprenyl-diphosphatase 3 (278 aa).

The next 6 membrane-spanning stretches (helical) occupy residues 42 to 62, 88 to 108, 119 to 139, 187 to 207, 224 to 244, and 254 to 274; these read DITAFTAIIQVGAVFATLLYF, YRFGWAVILGSIPIGLVGVAF, LWFVGGALILWSGVMGYADHV, VAVTRLSFFLSIPALMAAAAL, ATIIATVVSFAVAYVAIAWLL, and VFIGYRLALGATVLFLVATGI.

The protein belongs to the UppP family.

The protein resides in the cell membrane. It catalyses the reaction di-trans,octa-cis-undecaprenyl diphosphate + H2O = di-trans,octa-cis-undecaprenyl phosphate + phosphate + H(+). Catalyzes the dephosphorylation of undecaprenyl diphosphate (UPP). Confers resistance to bacitracin. This Frankia casuarinae (strain DSM 45818 / CECT 9043 / HFP020203 / CcI3) protein is Undecaprenyl-diphosphatase 3.